The sequence spans 308 residues: MAEKIKIGTMWLGGCSGCHLSIADFHEKIIDVMEHADFEFSPVLMDTKYDEIPELDVVIIEGGIVNDENREFAEELREKAKFVISYGTCAVYGGIPGLRNLWDKDEVIEEAYINSITTPNEEGVIPSEDVPHLEGRVKPLGEVIDVDFEVPGCPPRSDVAAEAVMALLTGEEIELPETNLCEVCPREKPPEGLAMDFIKRQFEVGKPEDDLCLIPQGLICMGPATVSICGAECPSIAIPCRGCYGPTARVEDQGAKMISAIASDYKVEEDKTVDPEEVAEQLDDIVGTFYTFTLPAALIPMKIQKEGK.

Belongs to the [NiFe]/[NiFeSe] hydrogenase small subunit family. In terms of assembly, the F420-non-reducing hydrogenase is composed of three subunits; MvhA, MvhD and MvhG. It forms a complex with the heterodisulfide reductase (hdr).

In terms of biological role, part of a complex that provides reducing equivalents for heterodisulfide reductase. This chain is F420-non-reducing hydrogenase subunit G (mvhG), found in Methanothermobacter thermautotrophicus (strain ATCC 29096 / DSM 1053 / JCM 10044 / NBRC 100330 / Delta H) (Methanobacterium thermoautotrophicum).